Consider the following 362-residue polypeptide: Peptide chain release factor 1 (362 aa).

The residue at position 238 (glutamine 238) is an N5-methylglutamine.

It belongs to the prokaryotic/mitochondrial release factor family. Methylated by PrmC. Methylation increases the termination efficiency of RF1.

The protein localises to the cytoplasm. Peptide chain release factor 1 directs the termination of translation in response to the peptide chain termination codons UAG and UAA. In Psychrobacter cryohalolentis (strain ATCC BAA-1226 / DSM 17306 / VKM B-2378 / K5), this protein is Peptide chain release factor 1.